The primary structure comprises 495 residues: GTPase Der (495 aa).

EngA-type G domains lie at 3 to 166 (PVVA…VQDE) and 208 to 381 (IKLA…ACAT). GTP is bound by residues 9 to 16 (GRPNVGKS), 56 to 60 (DTGGI), 118 to 121 (NKTD), 214 to 221 (GRPNVGKS), 261 to 265 (DTAGV), and 326 to 329 (NKWD). The region spanning 382 to 466 (RRVSTAMLTR…PIRIQFKEGE (85 aa)) is the KH-like domain.

It belongs to the TRAFAC class TrmE-Era-EngA-EngB-Septin-like GTPase superfamily. EngA (Der) GTPase family. As to quaternary structure, associates with the 50S ribosomal subunit.

GTPase that plays an essential role in the late steps of ribosome biogenesis. This Pectobacterium carotovorum subsp. carotovorum (strain PC1) protein is GTPase Der.